The primary structure comprises 605 residues: Protein ZRG17 (605 aa).

The Cytoplasmic segment spans residues 1–225 (METPQMNAIQ…DLLSNLPWPK (225 aa)). S16 and S131 each carry phosphoserine. A disordered region spans residues 118–178 (PAPKLVPPPP…PSSAASRTSF (61 aa)). Polar residues predominate over residues 143-176 (SKRSSMTLDSPFNFTTSTLQPHQQTPPSSAASRT). Residues 226–246 (AYIQLSIAALQIFACLITFQV) form a helical membrane-spanning segment. The Lumenal segment spans residues 247 to 254 (GHLYSWSN). Residues 255–275 (FITLSHFITYDIIGSLVIIFV) form a helical membrane-spanning segment. Over 276-287 (ENLSQFQVWFTG) the chain is Cytoplasmic. A helical membrane pass occupies residues 288-308 (TITFPFGLNRIDVLLSFALAV). Residue S309 is a topological domain, lumenal. The chain crosses the membrane as a helical span at residues 310–330 (LCFVGLDLLFHIIEEFIVLFV). Topologically, residues 331-363 (ESGSSLTNNHDHDEINEQIPHSHIANANDSQNE) are cytoplasmic. A helical membrane pass occupies residues 364–384 (NITLWYSILMINLVLSTLSLY). The Lumenal portion of the chain corresponds to 385-399 (KTFYANKYSNLKTKN). A helical membrane pass occupies residues 400 to 420 (PIITITYTAYLFIYPLLLDLL). The Cytoplasmic segment spans residues 421-422 (SS). The helical transmembrane segment at 423–443 (ISDYLATLVISSLILWHGLTI) threads the bilayer. Residues 444-545 (ARWTSTVLLM…ERLSEFKSRY (102 aa)) lie on the Lumenal side of the membrane. Residues 473 to 482 (DTTAHTQQVE) show a composition bias toward polar residues. The interval 473-497 (DTTAHTQQVESKAAKEKPSVRPRSM) is disordered. Residue S498 is modified to Phosphoserine. Residues 546-566 (ILNYDDIVISKVNFTLYVVLI) form a helical membrane-spanning segment. Residues 567-605 (KITMKGGSDDDELMLRLAIDKCIQTSIPTCETTIDIDRI) are Cytoplasmic-facing.

The protein resides in the endoplasmic reticulum membrane. In Saccharomyces cerevisiae (strain ATCC 204508 / S288c) (Baker's yeast), this protein is Protein ZRG17 (ZRG17).